The sequence spans 264 residues: Merozoite surface protein 2 (264 aa).

An N-terminal signal peptide occupies residues 1–20; it reads MKVIKTLSIINFFIFVTFNI. 2 N-linked (GlcNAc...) asparagine glycosylation sites follow: asparagine 22 and asparagine 36. The polymorphic region stretch occupies residues 44–190; that stretch reads ANEGSNTNSV…PQTAENENPA (147 aa). Residues 46-225 are disordered; it reads EGSNTNSVGA…DSQKECTDGN (180 aa). 2 consecutive repeat copies span residues 60–91 and 92–123. The segment at 60–123 is 2 X 32 AA perfects repeats; that stretch reads ADTIASGSQR…GESQTTTPTA (64 aa). A compositionally biased stretch (low complexity) spans 70 to 81; the sequence is STNSASTSTTNN. Residues 82–101 show a composition bias toward polar residues; it reads GESQTTTPTAADTIASGSQR. The span at 102 to 145 shows a compositional bias: low complexity; the sequence is STNSASTSTTNNGESQTTTPTAADTPTTTESNSPSPPITTTESS. N-linked (GlcNAc...) asparagine glycosylation occurs at asparagine 152. Residues 154–166 are compositionally biased toward basic and acidic residues; sequence TDGKGEESEKQNE. 2 N-linked (GlcNAc...) asparagine glycosylation sites follow: asparagine 168 and asparagine 213. The cysteines at positions 221 and 229 are disulfide-linked. N-linked (GlcNAc...) asparagine glycosylation is found at asparagine 237 and asparagine 238. Asparagine 238 carries the GPI-anchor amidated asparagine lipid modification. Residues 239 to 264 constitute a propeptide, removed in mature form; the sequence is SSNIASINKFVVLISATLVLSFAIFI.

The protein localises to the cell membrane. May play a role in the merozoite attachment to the erythrocyte. This Plasmodium falciparum (isolate fid3 / India) protein is Merozoite surface protein 2.